A 152-amino-acid polypeptide reads, in one-letter code: Transcriptional repressor NrdR (152 aa).

The segment at 3 to 34 is a zinc-finger region; it reads CPFCSTEETKVIDSRLVSEGYQVRRRRECTNC. Residues 49–139 enclose the ATP-cone domain; the sequence is PKIVKTDGYR…VYLSFENINE (91 aa).

Belongs to the NrdR family. Zn(2+) serves as cofactor.

Its function is as follows. Negatively regulates transcription of bacterial ribonucleotide reductase nrd genes and operons by binding to NrdR-boxes. The protein is Transcriptional repressor NrdR of Actinobacillus succinogenes (strain ATCC 55618 / DSM 22257 / CCUG 43843 / 130Z).